Reading from the N-terminus, the 754-residue chain is 5-methyltetrahydropteroyltriglutamate--homocysteine methyltransferase (754 aa).

5-methyltetrahydropteroyltri-L-glutamate is bound by residues 17–20 and K117; that span reads RELK. Residues 431–433 and E484 each bind L-homocysteine; that span reads IGS. Residues 431 to 433 and E484 each bind L-methionine; that span reads IGS. 5-methyltetrahydropteroyltri-L-glutamate-binding positions include 515 to 516 and W561; that span reads RC. Position 599 (D599) interacts with L-homocysteine. D599 is a binding site for L-methionine. A 5-methyltetrahydropteroyltri-L-glutamate-binding site is contributed by E605. H641, C643, and E665 together coordinate Zn(2+). The active-site Proton donor is H694. Position 726 (C726) interacts with Zn(2+).

Belongs to the vitamin-B12 independent methionine synthase family. Zn(2+) is required as a cofactor.

It carries out the reaction 5-methyltetrahydropteroyltri-L-glutamate + L-homocysteine = tetrahydropteroyltri-L-glutamate + L-methionine. Its pathway is amino-acid biosynthesis; L-methionine biosynthesis via de novo pathway; L-methionine from L-homocysteine (MetE route): step 1/1. Functionally, catalyzes the transfer of a methyl group from 5-methyltetrahydrofolate to homocysteine resulting in methionine formation. In Salmonella choleraesuis (strain SC-B67), this protein is 5-methyltetrahydropteroyltriglutamate--homocysteine methyltransferase.